We begin with the raw amino-acid sequence, 667 residues long: Transmembrane 9 superfamily member 1 (667 aa).

An N-terminal signal peptide occupies residues 1-22; it reads MIYKMAHVQLLLLYFFVSTVKA. Residues 23–302 are Lumenal-facing; sequence FYLPGVAPTT…DKYLHVYDPS (280 aa). Residues asparagine 61 and asparagine 282 are each glycosylated (N-linked (GlcNAc...) asparagine). Residues 303–323 form a helical membrane-spanning segment; that stretch reads IQWFSLINFSLVVVLLSSVVI. Topologically, residues 324–370 are cytoplasmic; it reads HSLLRALKSDFARYNELNLDDDFQEDSGWKLNHGDVFRSPSQSLTLS. Residues 371–391 traverse the membrane as a helical segment; the sequence is ILVGSGVQLFLMVTCSIFFAA. Topologically, residues 392 to 405 are lumenal; sequence LGFLSPSSRGSLAT. The helical transmembrane segment at 406–426 threads the bilayer; that stretch reads VMFILYALFGFVGSYTSMGIY. At 427-442 the chain is on the cytoplasmic side; the sequence is KFFNGPYWKANLILTP. The helical transmembrane segment at 443–463 threads the bilayer; that stretch reads LLVPGAILLIIIALNFFLMFV. Topologically, residues 464–474 are lumenal; sequence HSSGVIPASTL. A helical membrane pass occupies residues 475 to 495; the sequence is FFMVFLWFLFSIPLSFAGSLI. Residues 496–527 are Cytoplasmic-facing; that stretch reads ARKRCHWDEHPTKTNQIARQIPFQPWYLKTIP. A helical transmembrane segment spans residues 528–548; the sequence is ATLIAGIFPFGSIAVELYFIY. Over 549-560 the chain is Lumenal; it reads TSLWFNKIFYMF. The chain crosses the membrane as a helical span at residues 561–581; it reads GFLFFSFLLLTLTSSLVTILI. Residues 582–596 are Cytoplasmic-facing; that stretch reads TYHSLCLENWKWQWR. The chain crosses the membrane as a helical span at residues 597-617; sequence GFIIGGAGCALYVFIHSILFT. The Lumenal portion of the chain corresponds to 618 to 635; the sequence is KFKLGGFTTIVLYVGYSS. The chain crosses the membrane as a helical span at residues 636 to 656; the sequence is VISLLCCLVTGSIGFISSMLF. The Cytoplasmic segment spans residues 657 to 667; that stretch reads VRKIYSSIKVD.

It belongs to the nonaspanin (TM9SF) (TC 9.A.2) family.

Its subcellular location is the endosome membrane. The protein resides in the vacuole membrane. With TMN2 and TMN3, plays a critical role in the late stages of a nutrient-controlled pathway notably regulating FLO11 gene expression. Acts downstream of RAS2 and TOR. Essential for cell adhesion and filamentous growth. May play a role as effector of cellular copper homeostasis. This Saccharomyces cerevisiae (strain ATCC 204508 / S288c) (Baker's yeast) protein is Transmembrane 9 superfamily member 1 (EMP70).